We begin with the raw amino-acid sequence, 474 residues long: Catalase (474 aa).

Residues His-52 and Asn-124 contribute to the active site. Residue Tyr-334 coordinates heme.

Belongs to the catalase family. The cofactor is heme.

The enzyme catalyses 2 H2O2 = O2 + 2 H2O. In terms of biological role, decomposes hydrogen peroxide into water and oxygen; serves to protect cells from the toxic effects of hydrogen peroxide. This chain is Catalase (katA), found in Campylobacter jejuni subsp. jejuni serotype O:2 (strain ATCC 700819 / NCTC 11168).